A 350-amino-acid polypeptide reads, in one-letter code: Probable lactoylglutathione lyase, chloroplastic (350 aa).

Residues 1-61 constitute a chloroplast transit peptide; that stretch reads MVRIIPMAAS…KLLRRSVNCL (61 aa). VOC domains lie at 88 to 212 and 218 to 342; these read RMLH…LLER and PLCQ…FVDN. Histidine 91 is a binding site for Zn(2+). Residue arginine 95 participates in substrate binding. Zn(2+) is bound at residue glutamate 142. Substrate-binding residues include asparagine 146 and histidine 160. Zn(2+)-binding residues include histidine 160 and glutamate 208. The Proton donor/acceptor role is filled by glutamate 208.

The protein belongs to the glyoxalase I family. Zn(2+) serves as cofactor.

It is found in the plastid. The protein resides in the chloroplast stroma. The enzyme catalyses (R)-S-lactoylglutathione = methylglyoxal + glutathione. It functions in the pathway secondary metabolite metabolism; methylglyoxal degradation; (R)-lactate from methylglyoxal: step 1/2. Its function is as follows. Catalyzes the conversion of hemimercaptal, formed from methylglyoxal and glutathione, to S-lactoylglutathione. The protein is Probable lactoylglutathione lyase, chloroplastic of Arabidopsis thaliana (Mouse-ear cress).